Here is a 329-residue protein sequence, read N- to C-terminus: uncharacterized protein (329 aa).

Coiled-coil stretches lie at residues 57–120 (KKEE…QEVT) and 225–251 (QRQR…GNMM).

This is an uncharacterized protein from Homo sapiens (Human).